We begin with the raw amino-acid sequence, 379 residues long: 3-dehydroquinate synthase (379 aa).

Residues serine 67–lysine 72, glycine 101–aspartate 105, threonine 125–threonine 126, lysine 138, and lysine 147 each bind NAD(+). Residues glutamate 180, histidine 242, and histidine 258 each coordinate Zn(2+).

The protein belongs to the sugar phosphate cyclases superfamily. Dehydroquinate synthase family. The cofactor is NAD(+). Co(2+) is required as a cofactor. It depends on Zn(2+) as a cofactor.

It localises to the cytoplasm. It catalyses the reaction 7-phospho-2-dehydro-3-deoxy-D-arabino-heptonate = 3-dehydroquinate + phosphate. It functions in the pathway metabolic intermediate biosynthesis; chorismate biosynthesis; chorismate from D-erythrose 4-phosphate and phosphoenolpyruvate: step 2/7. Functionally, catalyzes the conversion of 3-deoxy-D-arabino-heptulosonate 7-phosphate (DAHP) to dehydroquinate (DHQ). This is 3-dehydroquinate synthase from Chlamydia abortus (strain DSM 27085 / S26/3) (Chlamydophila abortus).